A 689-amino-acid chain; its full sequence is Glycine--tRNA ligase beta subunit (689 aa).

Belongs to the class-II aminoacyl-tRNA synthetase family. Tetramer of two alpha and two beta subunits.

It is found in the cytoplasm. The enzyme catalyses tRNA(Gly) + glycine + ATP = glycyl-tRNA(Gly) + AMP + diphosphate. The chain is Glycine--tRNA ligase beta subunit from Acinetobacter baumannii (strain AB307-0294).